The sequence spans 222 residues: Transmembrane reductase CYB561D2 (222 aa).

The Cytoplasmic portion of the chain corresponds to 2–17 (ALSVETESHIYRALRT). Residues 14–217 (ALRTVSGAAA…NQVSNAYLYR (204 aa)) enclose the Cytochrome b561 domain. The helical transmembrane segment at 18-38 (VSGAAAHLVALGFTIFVAVLA) threads the bilayer. Topologically, residues 39-46 (RPGSSLFS) are lumenal. Residues 47-67 (WHPVLMSLAFSFLMTEALLVF) traverse the membrane as a helical segment. H48 lines the heme b pocket. The Cytoplasmic portion of the chain corresponds to 68–85 (SPESSLLRSLSRKGRARC). Positions 86 and 120 each coordinate heme b. A helical membrane pass occupies residues 86–106 (HWVLQLLALLCALLGLGLVIL). The Lumenal segment spans residues 107-122 (HKEQLGKAHLATWHGR). A helical transmembrane segment spans residues 123 to 143 (AGLLAVLWAGLQCSGGVGLLY). Residues 144 to 162 (PKLLPRWPLAKLKLYHATS) are Cytoplasmic-facing. H159 is a heme b binding site. The chain crosses the membrane as a helical span at residues 163-183 (GLVGYLLGGASLLLGMCSLWF). Residues 184–186 (TAT) are Lumenal-facing. Residues 187–207 (VTGGVWYLAVLCPVITSLVIM) form a helical membrane-spanning segment. Over 208-222 (NQVSNAYLYRKRIQP) the chain is Cytoplasmic.

Heme b serves as cofactor.

Its subcellular location is the endoplasmic reticulum membrane. It is found in the cytoplasmic vesicle membrane. The catalysed reaction is monodehydro-L-ascorbate radical(out) + L-ascorbate(in) = monodehydro-L-ascorbate radical(in) + L-ascorbate(out). It catalyses the reaction Fe(3+)(out) + L-ascorbate(in) = monodehydro-L-ascorbate radical(in) + Fe(2+)(out) + H(+). Functionally, transmembrane reductase that may use ascorbate as an electron donor in the cytoplasm and transfer electrons across endoplasmic reticulum membranes to reduce monodehydro-L-ascorbate radical and iron cations Fe(3+) in the lumen of that compartment. This Bos taurus (Bovine) protein is Transmembrane reductase CYB561D2.